The sequence spans 471 residues: Ribulose bisphosphate carboxylase large chain (471 aa).

Lys-5 is subject to N6,N6,N6-trimethyllysine. Asn-114 and Thr-164 together coordinate substrate. Catalysis depends on Lys-166, which acts as the Proton acceptor. Substrate is bound at residue Lys-168. The Mg(2+) site is built by Lys-192, Asp-194, and Glu-195. Lys-192 is subject to N6-carboxylysine. His-285 serves as the catalytic Proton acceptor. Substrate is bound by residues Arg-286, His-318, and Ser-370.

It belongs to the RuBisCO large chain family. Type I subfamily. In terms of assembly, heterohexadecamer of 8 large chains and 8 small chains; disulfide-linked. The disulfide link is formed within the large subunit homodimers. Mg(2+) is required as a cofactor. Post-translationally, the disulfide bond which can form in the large chain dimeric partners within the hexadecamer appears to be associated with oxidative stress and protein turnover.

The protein resides in the plastid. It localises to the chloroplast. It catalyses the reaction 2 (2R)-3-phosphoglycerate + 2 H(+) = D-ribulose 1,5-bisphosphate + CO2 + H2O. It carries out the reaction D-ribulose 1,5-bisphosphate + O2 = 2-phosphoglycolate + (2R)-3-phosphoglycerate + 2 H(+). Its function is as follows. RuBisCO catalyzes two reactions: the carboxylation of D-ribulose 1,5-bisphosphate, the primary event in carbon dioxide fixation, as well as the oxidative fragmentation of the pentose substrate in the photorespiration process. Both reactions occur simultaneously and in competition at the same active site. This is Ribulose bisphosphate carboxylase large chain from Strychnos nux-vomica (Poison nut).